A 227-amino-acid polypeptide reads, in one-letter code: Ribonuclease 3 (227 aa).

The RNase III domain maps to 4–133; it reads FEKLEKLLSY…LIAAIYLDSN (130 aa). Position 46 (Glu46) interacts with Mg(2+). Asp50 is a catalytic residue. Asn119 and Glu122 together coordinate Mg(2+). Glu122 is an active-site residue. Residues 158–226 form the DRBM domain; it reads DPKTALQEWA…ARSLLHRLKN (69 aa).

It belongs to the ribonuclease III family. Homodimer. The cofactor is Mg(2+).

It localises to the cytoplasm. The catalysed reaction is Endonucleolytic cleavage to 5'-phosphomonoester.. Digests double-stranded RNA. Involved in the processing of primary rRNA transcript to yield the immediate precursors to the large and small rRNAs (23S and 16S). Processes some mRNAs, and tRNAs when they are encoded in the rRNA operon. Processes pre-crRNA and tracrRNA of type II CRISPR loci if present in the organism. The protein is Ribonuclease 3 of Rickettsia africae (strain ESF-5).